We begin with the raw amino-acid sequence, 241 residues long: Large ribosomal subunit protein uL3 (241 aa).

Disordered stretches follow at residues V139–M166 and A214–A241. Position 151 is an N5-methylglutamine (Q151). Low complexity predominate over residues A229–A241.

As to quaternary structure, part of the 50S ribosomal subunit. Forms a cluster with proteins L14 and L19. In terms of processing, methylated, on either Lys-155 or Lys-158. Methylated by PrmB.

In terms of biological role, one of the primary rRNA binding proteins, it binds directly near the 3'-end of the 23S rRNA, where it nucleates assembly of the 50S subunit. This Rhodopseudomonas palustris (strain ATCC BAA-98 / CGA009) protein is Large ribosomal subunit protein uL3.